The following is a 999-amino-acid chain: Ulvan lyase, long isoform (999 aa).

A signal peptide spans 1–21; the sequence is MKCLKTLLVSTTLLTAFSLNA. 126 to 127 lines the substrate pocket; the sequence is SH. His127 (proton donor/acceptor) is an active-site residue. Residues Asp189, Asp199, and Lys201 each contribute to the Ca(2+) site. 2 residues coordinate substrate: Tyr280 and Arg297. Residues Asp300, Asp303, and Tyr305 each contribute to the Ca(2+) site. Tyr361 contributes to the substrate binding site.

The protein belongs to the polysaccharide lyase 24 family.

Functionally, ulvan lyase involved in ulvan degradation. Ulvan is the main polysaccharide component of the Ulvales (green seaweed) cell wall. It is composed of disaccharide building blocks comprising 3-sulfated rhamnose (Rha3S) linked to D-glucuronic acid (GlcA), L-iduronic acid (IduA), or D-xylose (Xyl). Ulvan lyase catalyzes preferentially the endolytic cleavage of the glycosidic bond between Rha3S and the uronic acid GlcA, but not IduA, producing oligosaccharides that have unsaturated 4-deoxy-L-threo-hex-4-enopyranosiduronic acid (deltaUA) at the non-reducing end. The most abundant end products in the degradation of the ulvan polysaccharide were deltaUA-Rha3S disaccharides and deltaUA-Rha3S-IduA-Rha3S and deltaUA-Rha3S-Xyl-Rha3S tetrasaccharides. This Alteromonas sp. (strain LOR) protein is Ulvan lyase, long isoform.